Consider the following 1409-residue polypeptide: DNA-directed RNA polymerase subunit beta' (1409 aa).

4 residues coordinate Zn(2+): Cys-70, Cys-72, Cys-85, and Cys-88. Residues Asp-460, Asp-462, and Asp-464 each coordinate Mg(2+). Positions 814, 888, 895, and 898 each coordinate Zn(2+).

This sequence belongs to the RNA polymerase beta' chain family. In terms of assembly, the RNAP catalytic core consists of 2 alpha, 1 beta, 1 beta' and 1 omega subunit. When a sigma factor is associated with the core the holoenzyme is formed, which can initiate transcription. Mg(2+) serves as cofactor. It depends on Zn(2+) as a cofactor.

The catalysed reaction is RNA(n) + a ribonucleoside 5'-triphosphate = RNA(n+1) + diphosphate. DNA-dependent RNA polymerase catalyzes the transcription of DNA into RNA using the four ribonucleoside triphosphates as substrates. This chain is DNA-directed RNA polymerase subunit beta', found in Shewanella violacea.